A 335-amino-acid polypeptide reads, in one-letter code: NADH-quinone oxidoreductase subunit H (335 aa).

8 helical membrane passes run 12-32 (IIAVVKAIVVLLAVVVCGALL), 81-101 (VIFTLAPVVAMSALLIAFAVI), 114-134 (IGLLFFFAMAGLSVYAVLFAG), 154-174 (VSYEVFMGLALMGIVVQVGSF), 187-207 (LWFIIPQFFGFCTFFIAGVAV), 238-258 (FFVGEYIGIILISALLVTLFF), 270-290 (SLAFFWFALKTAFFIMLFILL), and 307-327 (WKFCLPLTLINLLVTAAIVLL).

This sequence belongs to the complex I subunit 1 family. In terms of assembly, NDH-1 is composed of 13 different subunits. Subunits NuoA, H, J, K, L, M, N constitute the membrane sector of the complex.

It is found in the cell inner membrane. The catalysed reaction is a quinone + NADH + 5 H(+)(in) = a quinol + NAD(+) + 4 H(+)(out). In terms of biological role, NDH-1 shuttles electrons from NADH, via FMN and iron-sulfur (Fe-S) centers, to quinones in the respiratory chain. The immediate electron acceptor for the enzyme in this species is believed to be ubiquinone. Couples the redox reaction to proton translocation (for every two electrons transferred, four hydrogen ions are translocated across the cytoplasmic membrane), and thus conserves the redox energy in a proton gradient. This subunit may bind ubiquinone. This Pseudomonas syringae pv. tomato (strain ATCC BAA-871 / DC3000) protein is NADH-quinone oxidoreductase subunit H.